Reading from the N-terminus, the 581-residue chain is Tetratricopeptide repeat and J domain-containing co-chaperone DNJ1 (581 aa).

Positions 1-19 (MKATLLPSLLALSLTLCLA) are cleaved as a signal peptide. 7 TPR repeats span residues 48–81 (ASQH…DPSS), 82–115 (WLTY…NPKF), 116–149 (DKAY…RAEK), 221–254 (LETR…TPSP), 257–293 (LRRL…DPDN), 378–411 (LELH…DPDN), and 412–445 (VEAT…SGRT). N293 is a glycosylation site (N-linked (GlcNAc...) asparagine). The J domain maps to 467–528 (DYYKVLGVKR…ELRKKYDQGD (62 aa)). The interval 522–544 (KKYDQGDDPNDPMGGQQGGYGNP) is disordered.

In terms of assembly, interacts with the ER chaperone BIP1.

The protein resides in the endoplasmic reticulum lumen. Its function is as follows. Endoplasmic reticulum (ER) protein that functions as a co-chaperone for BIP1 during ER stress. Might be specifically involved in the refolding of N-glycosylated proteins. This is Tetratricopeptide repeat and J domain-containing co-chaperone DNJ1 from Mycosarcoma maydis (Corn smut fungus).